Reading from the N-terminus, the 271-residue chain is Regulatory protein RecX (271 aa).

The protein belongs to the RecX family.

The protein resides in the cytoplasm. Its function is as follows. Modulates RecA activity. The sequence is that of Regulatory protein RecX from Lactobacillus johnsonii (strain CNCM I-12250 / La1 / NCC 533).